A 499-amino-acid chain; its full sequence is Glucooligosaccharide oxidase (499 aa).

The signal sequence occupies residues 1-25 (MVRIQELTAALSLASVVQASWIQKR). Cysteine 31 and cysteine 80 are joined by a disulfide. One can recognise an FAD-binding PCMH-type domain in the interval 58-230 (VDYDPAAIAI…SEFEFNTFEA (173 aa)). The 6-(S-cysteinyl)-8alpha-(pros-histidyl)-FAD (His-Cys) cross-link spans 95-155 (HSYGSYGFGG…GNRALSHGTC (61 aa)). Substrate-binding residues include tyrosine 97, threonine 154, and arginine 270. 2 N-linked (GlcNAc...) asparagine glycosylation sites follow: asparagine 330 and asparagine 366. Substrate contacts are provided by glutamine 378 and glutamine 409. Asparagine 419 carries N-linked (GlcNAc...) asparagine glycosylation. Tyrosine 454 contacts substrate. Catalysis depends on tyrosine 454, which acts as the Proton acceptor.

Belongs to the oxygen-dependent FAD-linked oxidoreductase family. FAD serves as cofactor. In terms of processing, the FAD cofactor is bound via a bicovalent 6-S-cysteinyl, 8alpha-N1-histidyl FAD linkage.

Its subcellular location is the secreted. It carries out the reaction beta-lactose + O2 = lactobiono-1,5-lactone + H2O2. The enzyme catalyses D-cellobiose + O2 = D-cellobiono-1,5-lactone + H2O2. It catalyses the reaction D-cellotriose + O2 = D-cellotriono-1,5-lactone + H2O2. The catalysed reaction is D-cellotetraose + O2 = D-cellotetraono-1,5-lactone + H2O2. It carries out the reaction D-cellopentaose + O2 = D-cellopentaono-1,5-lactone + H2O2. The enzyme catalyses D-cellohexaose + O2 = D-cellohexaono-1,5-lactone + H2O2. Its function is as follows. Catalyzes the selective oxidation of C1 hydroxyl moieties on mono- and disaccharides with concomitant reduction of molecular oxygen to hydrogen peroxide. This results in the formation of the corresponding lactones, which typically undergo spontaneous hydrolysis. Glucooligosaccharide oxidase is able to oxidize the monosaccharide D-glucose as well as the disaccharides maltose, cellobiose, and lactose. In addition, it shows high selectivity for cello- and maltooligosaccharides, indicating that glucooligosaccharide oxidase prefers oligosaccharides with a beta-D-glucosyl unit on the reducing end and additional sugar units linked by alpha- or beta-1,4 glucosidic bonds. The protein is Glucooligosaccharide oxidase (gluO) of Sarocladium strictum (Black bundle disease fungus).